Reading from the N-terminus, the 121-residue chain is N-alpha-acetyltransferase 38, NatC auxiliary subunit (121 aa).

Positions 40 to 113 (PGRRKLQKWL…IVSLSIDEPD (74 aa)) constitute a Sm domain.

This sequence belongs to the snRNP Sm proteins family. Component of the N-terminal acetyltransferase C (NatC) complex, which is composed of Naa35, Sbat/Naa38 and Naa30A. Interacts with Smn and Hez; along with Hez and Vlet, may form an accessory subcomplex involved in SMN complex function.

The protein localises to the cytoplasm. Its subcellular location is the nucleus. In terms of biological role, auxiliary component of the N-terminal acetyltransferase C (NatC) complex which catalyzes acetylation of N-terminal methionine residues. May have an accessory function in the survival motor neuron (SMN) complex. This chain is N-alpha-acetyltransferase 38, NatC auxiliary subunit, found in Drosophila melanogaster (Fruit fly).